The primary structure comprises 367 residues: Undecaprenyl-phosphate alpha-N-acetylglucosaminyl 1-phosphate transferase (367 aa).

Transmembrane regions (helical) follow at residues 3–23, 46–66, 69–89, 132–152, 158–178, 187–207, 213–233, 242–262, 294–314, and 318–338; these read LLTVSTDLISIFLFTTLFLFF, LIPLVGGISVYAGICFTFGIV, YIPHASLYLACAGVLVFIGAL, VLGPFGYFLTLFAVWAAINAF, IDGLLGGLSCVSFAAIGMILW, IWCFAMIAAILPYIMLNLGIL, VFMGDAGSTLIGFTVIWILLE, ISPVTALWIIAIPLMDMVAIM, AFVLITLAAALLASIGVLAEY, and VPEWVMLVLFLLAFLLYGYCI.

This sequence belongs to the glycosyltransferase 4 family. WecA subfamily. The cofactor is Mg(2+). It depends on Mn(2+) as a cofactor.

It is found in the cell inner membrane. It carries out the reaction di-trans,octa-cis-undecaprenyl phosphate + UDP-N-acetyl-alpha-D-glucosamine = N-acetyl-alpha-D-glucosaminyl-di-trans,octa-cis-undecaprenyl diphosphate + UMP. It functions in the pathway bacterial outer membrane biogenesis; LPS O-antigen biosynthesis. Its pathway is bacterial outer membrane biogenesis; enterobacterial common antigen biosynthesis. Functionally, catalyzes the transfer of the GlcNAc-1-phosphate moiety from UDP-GlcNAc onto the carrier lipid undecaprenyl phosphate (C55-P), yielding GlcNAc-pyrophosphoryl-undecaprenyl (GlcNAc-PP-C55). The protein is Undecaprenyl-phosphate alpha-N-acetylglucosaminyl 1-phosphate transferase of Escherichia coli O157:H7.